The sequence spans 238 residues: MDYAMKSLSLLYPRSLSRHVAVSTAVVTQQLVSEPSRETPRARPCRVSTADRKVRKGIMAHSLEDLLGKVQDILKLKDKPFSLVLEEDGTIVETEEYFQALPRDTVFMVLQKGQKWKSPSEQRKKKAQLSLSQKPTKKIDVARVTFDLYKLNPQDFIGCLNVKATLYDTYSLSYDLHCYRAKRIVKEMLRWTLFSMQATGHMLLGTSSYMQQFLDATEEEQPSKAKASLLPACLKMLQ.

The tract at residues 1 to 35 (MDYAMKSLSLLYPRSLSRHVAVSTAVVTQQLVSEP) is required for liquid-liquid phase separation (LLPS). The region spanning 41 to 118 (RARPCRVSTA…VLQKGQKWKS (78 aa)) is the CIDE-N domain.

It belongs to the CIDE family. Homodimer. Interacts with CIDEA. Homooligomer; undergoes liquid-liquid phase separation (LLPS) via its N-terminus, facilitating lipid droplet fusion, occurs at the lipid droplet contact sites. Interacts with PLIN1. Interacts with NFAT5; this interaction is direct and retains NFAT5 in the cytoplasm. Interacts with CEBPB. Interacts with isoform CLSTN3beta of CLSTN3; inhibiting the lipid transferase activity of CIDEC. Post-translationally, ubiquitinated and targeted to proteasomal degradation, resulting in a short half-life (about 15 minutes in 3T3-L1 cells). Protein stability depends on triaclyglycerol synthesis, fatty acid availability and lipid droplet formation.

The protein resides in the lipid droplet. The protein localises to the endoplasmic reticulum. It is found in the nucleus. It catalyses the reaction a triacyl-sn-glycerol(in) = a triacyl-sn-glycerol(out). Its function is as follows. Lipid transferase specifically expressed in white adipose tissue, which promotes unilocular lipid droplet formation by mediating lipid droplet fusion. Lipid droplet fusion promotes their enlargement, restricting lipolysis and favoring lipid storage. Localizes on the lipid droplet surface, at focal contact sites between lipid droplets, and mediates atypical lipid droplet fusion by undergoing liquid-liquid phase separation (LLPS) and promoting directional net neutral lipid transfer from the smaller to larger lipid droplets. The transfer direction may be driven by the internal pressure difference between the contacting lipid droplet pair. Its role in neutral lipid transfer and lipid droplet enlargement is activated by the interaction with PLIN1. May also act as a CEBPB coactivator in the white adipose tissue to control the expression of a subset of CEBPB downstream target genes, including SOCS1, SOCS3, TGFB1, TGFBR1, ID2 and XDH. When overexpressed in preadipocytes, induces apoptosis or increases cell susceptibility to apoptosis induced by serum deprivation or TGFB treatment. This chain is Lipid transferase CIDEC, found in Rattus norvegicus (Rat).